The following is a 259-amino-acid chain: Indole-3-glycerol phosphate synthase (259 aa).

The protein belongs to the TrpC family.

The catalysed reaction is 1-(2-carboxyphenylamino)-1-deoxy-D-ribulose 5-phosphate + H(+) = (1S,2R)-1-C-(indol-3-yl)glycerol 3-phosphate + CO2 + H2O. It participates in amino-acid biosynthesis; L-tryptophan biosynthesis; L-tryptophan from chorismate: step 4/5. The sequence is that of Indole-3-glycerol phosphate synthase from Dehalococcoides mccartyi (strain ATCC BAA-2266 / KCTC 15142 / 195) (Dehalococcoides ethenogenes (strain 195)).